Here is a 305-residue protein sequence, read N- to C-terminus: Aspartate carbamoyltransferase catalytic subunit (305 aa).

R52 and T53 together coordinate carbamoyl phosphate. K80 lines the L-aspartate pocket. R102, H132, and Q135 together coordinate carbamoyl phosphate. R165 and R217 together coordinate L-aspartate. 2 residues coordinate carbamoyl phosphate: A258 and P259.

It belongs to the aspartate/ornithine carbamoyltransferase superfamily. ATCase family. As to quaternary structure, heterododecamer (2C3:3R2) of six catalytic PyrB chains organized as two trimers (C3), and six regulatory PyrI chains organized as three dimers (R2).

The catalysed reaction is carbamoyl phosphate + L-aspartate = N-carbamoyl-L-aspartate + phosphate + H(+). It participates in pyrimidine metabolism; UMP biosynthesis via de novo pathway; (S)-dihydroorotate from bicarbonate: step 2/3. Functionally, catalyzes the condensation of carbamoyl phosphate and aspartate to form carbamoyl aspartate and inorganic phosphate, the committed step in the de novo pyrimidine nucleotide biosynthesis pathway. This chain is Aspartate carbamoyltransferase catalytic subunit, found in Latilactobacillus sakei subsp. sakei (strain 23K) (Lactobacillus sakei subsp. sakei).